The following is a 61-amino-acid chain: Protein CopA/IncA (61 aa).

Its function is as follows. Controls the copy number in gene replication. The sequence is that of Protein CopA/IncA (copA) from Escherichia coli.